The following is an 85-amino-acid chain: Large ribosomal subunit protein bL27 (85 aa).

The segment covering 1-10 (MAQKKGGGST) has biased composition (gly residues). The interval 1–21 (MAQKKGGGSTRNGRDSQPKML) is disordered.

This sequence belongs to the bacterial ribosomal protein bL27 family.

The chain is Large ribosomal subunit protein bL27 from Leptothrix cholodnii (strain ATCC 51168 / LMG 8142 / SP-6) (Leptothrix discophora (strain SP-6)).